The following is a 906-amino-acid chain: Ectonucleotide pyrophosphatase/phosphodiesterase family member 1 (906 aa).

Positions 1–22 (MERDGDQAGHGPRHGSAGNGRE) are disordered. Residues 1-58 (MERDGDQAGHGPRHGSAGNGRELESPAAASLLAPMDLGEEPLEKAERARPAKDPNTYK) lie on the Cytoplasmic side of the membrane. At serine 25 the chain carries Phosphoserine. The short motif at 27 to 34 (AAASLLAP) is the Di-leucine motif element. A helical; Signal-anchor for type II membrane protein transmembrane segment spans residues 59-79 (VLSLVLSVCVLTTILGCIFGL). Residues 80 to 906 (KPSCAKEVKS…THLPIFSQED (827 aa)) lie on the Extracellular side of the membrane. SMB domains are found at residues 86–126 (EVKS…VEPT) and 127–171 (HIWT…DKKS). 10 cysteine pairs are disulfide-bonded: cysteine 90–cysteine 104, cysteine 94–cysteine 122, cysteine 102–cysteine 115, cysteine 108–cysteine 114, cysteine 131–cysteine 148, cysteine 136–cysteine 166, cysteine 146–cysteine 159, cysteine 152–cysteine 158, cysteine 177–cysteine 223, and cysteine 185–cysteine 397. Residue asparagine 161 is glycosylated (N-linked (GlcNAc...) asparagine). The phosphodiesterase stretch occupies residues 173 to 573 (VEETCESIDT…APNNGSHGSL (401 aa)). AMP contacts are provided by aspartate 200, threonine 238, and asparagine 259. Aspartate 200 and threonine 238 together coordinate Zn(2+). The active-site AMP-threonine intermediate is threonine 238. Positions 238 and 259 each coordinate CMP. Residues threonine 238 and asparagine 259 each coordinate dTMP. Residues threonine 238 and asparagine 259 each contribute to the GMP site. Phosphothreonine is present on threonine 238. N-linked (GlcNAc...) asparagine glycosylation is present at asparagine 267. Residues leucine 272, lysine 277, and tyrosine 322 each coordinate GMP. AMP contacts are provided by lysine 277 and tyrosine 322. Lysine 277 and tyrosine 322 together coordinate CMP. Tyrosine 322 contacts dTMP. A glycan (N-linked (GlcNAc...) asparagine) is linked at asparagine 323. Aspartate 358 provides a ligand contact to AMP. Zn(2+)-binding residues include aspartate 358, histidine 362, aspartate 405, and histidine 406. Residue aspartate 358 participates in CMP binding. DTMP is bound at residue aspartate 358. Aspartate 358 provides a ligand contact to GMP. Histidine 362 is a 2',3'-cGAMP binding site. Position 406 (histidine 406) interacts with AMP. Residue histidine 406 coordinates CMP. Histidine 406 is a dTMP binding site. Histidine 406 provides a ligand contact to GMP. 6 disulfide bridges follow: cysteine 413–cysteine 512, cysteine 462–cysteine 849, cysteine 596–cysteine 653, cysteine 607–cysteine 707, cysteine 609–cysteine 692, and cysteine 819–cysteine 829. The N-linked (GlcNAc...) asparagine glycan is linked to asparagine 459. Position 514 (serine 514) interacts with 2',3'-cGAMP. Histidine 517 lines the AMP pocket. Histidine 517 is a binding site for Zn(2+). A CMP-binding site is contributed by histidine 517. Histidine 517 provides a ligand contact to dTMP. Histidine 517 is a GMP binding site. N-linked (GlcNAc...) asparagine glycans are attached at residues asparagine 567 and asparagine 624. Positions 579–628 (KPIYNPSHPKEEGFLSQCPIKSTSNDLGCTCDPWIVPIKDFEKQLNLTTE) are linker. The nuclease-like domain stretch occupies residues 635-906 (HMTVPYGRPR…THLPIFSQED (272 aa)). Ca(2+) is bound by residues aspartate 781, aspartate 783, aspartate 785, arginine 787, and aspartate 789.

It belongs to the nucleotide pyrophosphatase/phosphodiesterase family. As to quaternary structure, ectonucleotide pyrophosphatase/phosphodiesterase family member 1: Homodimer. Ectonucleotide pyrophosphatase/phosphodiesterase family member 1: Interacts with INSR; leading to inhibit INSR autophosphorylation and subsequent activation of INSR kinase activity. Ectonucleotide pyrophosphatase/phosphodiesterase family member 1, secreted form: Monomeric. Requires Zn(2+) as cofactor. N-glycosylated. Post-translationally, the secreted form is produced through cleavage at Lys-85 by intracellular processing. Selectively expressed on the surface of antibody-secreting cells. Expressed in osteocytes and osteoclasts.

The protein resides in the cell membrane. Its subcellular location is the basolateral cell membrane. It is found in the secreted. The catalysed reaction is Hydrolytically removes 5'-nucleotides successively from the 3'-hydroxy termini of 3'-hydroxy-terminated oligonucleotides.. It catalyses the reaction a ribonucleoside 5'-triphosphate + H2O = a ribonucleoside 5'-phosphate + diphosphate + H(+). The enzyme catalyses ATP + H2O = AMP + diphosphate + H(+). It carries out the reaction UTP + H2O = UMP + diphosphate + H(+). The catalysed reaction is GTP + H2O = GMP + diphosphate + H(+). It catalyses the reaction CTP + H2O = CMP + diphosphate + H(+). The enzyme catalyses 2',3'-cGAMP + 2 H2O = GMP + AMP + 2 H(+). It carries out the reaction P(1),P(4)-bis(5'-adenosyl) tetraphosphate + H2O = AMP + ATP + 2 H(+). The catalysed reaction is 3',5'-cyclic AMP + H2O = AMP + H(+). At low concentrations of ATP, a phosphorylated intermediate is formed which inhibits further hydrolysis. Functionally, nucleotide pyrophosphatase that generates diphosphate (PPi) and functions in bone mineralization and soft tissue calcification by regulating pyrophosphate levels. PPi inhibits bone mineralization and soft tissue calcification by binding to nascent hydroxyapatite crystals, thereby preventing further growth of these crystals. Preferentially hydrolyzes ATP, but can also hydrolyze other nucleoside 5' triphosphates such as GTP, CTP and UTP to their corresponding monophosphates with release of pyrophosphate, as well as diadenosine polyphosphates, and also 3',5'-cAMP to AMP. May also be involved in the regulation of the availability of nucleotide sugars in the endoplasmic reticulum and Golgi, and the regulation of purinergic signaling. Inhibits ectopic joint calcification and maintains articular chondrocytes by repressing hedgehog signaling; it is however unclear whether hedgehog inhibition is direct or indirect. Appears to modulate insulin sensitivity. Also involved in melanogenesis. Also able to hydrolyze 2',3'-cGAMP (cyclic GMP-AMP), a second messenger that activates TMEM173/STING and triggers type-I interferon production. 2',3'-cGAMP degradation takes place in the lumen or extracellular space, and not in the cytosol where it is produced; the role of 2',3'-cGAMP hydrolysis is therefore unclear. Not able to hydrolyze the 2',3'-cGAMP linkage isomer 3',3'-cGAMP. The polypeptide is Ectonucleotide pyrophosphatase/phosphodiesterase family member 1 (Mus musculus (Mouse)).